The sequence spans 300 residues: Eukaryotic translation initiation factor 3 subunit F (300 aa).

Positions 33–169 (VKVHPVALFS…VQCYVSALLG (137 aa)) constitute an MPN domain.

It belongs to the eIF-3 subunit F family. Component of the eukaryotic translation initiation factor 3 (eIF-3) complex.

Its subcellular location is the cytoplasm. In terms of biological role, component of the eukaryotic translation initiation factor 3 (eIF-3) complex, which is involved in protein synthesis of a specialized repertoire of mRNAs and, together with other initiation factors, stimulates binding of mRNA and methionyl-tRNAi to the 40S ribosome. The eIF-3 complex specifically targets and initiates translation of a subset of mRNAs involved in cell proliferation. This chain is Eukaryotic translation initiation factor 3 subunit F, found in Malassezia globosa (strain ATCC MYA-4612 / CBS 7966) (Dandruff-associated fungus).